The chain runs to 271 residues: Diaminopimelate epimerase (271 aa).

Substrate-binding residues include Asn-13, Gln-46, and Asn-66. The active-site Proton donor is Cys-75. Substrate-binding positions include Gly-76–Asn-77, Asn-155, Asn-188, and Glu-206–Arg-207. The active-site Proton acceptor is the Cys-215. Gly-216–Ser-217 contacts substrate.

It belongs to the diaminopimelate epimerase family. As to quaternary structure, homodimer.

Its subcellular location is the cytoplasm. The catalysed reaction is (2S,6S)-2,6-diaminopimelate = meso-2,6-diaminopimelate. It functions in the pathway amino-acid biosynthesis; L-lysine biosynthesis via DAP pathway; DL-2,6-diaminopimelate from LL-2,6-diaminopimelate: step 1/1. Catalyzes the stereoinversion of LL-2,6-diaminopimelate (L,L-DAP) to meso-diaminopimelate (meso-DAP), a precursor of L-lysine and an essential component of the bacterial peptidoglycan. The chain is Diaminopimelate epimerase from Vesicomyosocius okutanii subsp. Calyptogena okutanii (strain HA).